A 354-amino-acid chain; its full sequence is Protein RecA (354 aa).

67–74 contacts ATP; that stretch reads GPESSGKT. Positions 333–354 are disordered; it reads MNEFVPSSEEQAEASLSEDHDQ.

Belongs to the RecA family.

It localises to the cytoplasm. Can catalyze the hydrolysis of ATP in the presence of single-stranded DNA, the ATP-dependent uptake of single-stranded DNA by duplex DNA, and the ATP-dependent hybridization of homologous single-stranded DNAs. It interacts with LexA causing its activation and leading to its autocatalytic cleavage. This chain is Protein RecA, found in Laribacter hongkongensis (strain HLHK9).